The primary structure comprises 531 residues: Peptide chain release factor 3 (531 aa).

One can recognise a tr-type G domain in the interval 11 to 280; that stretch reads GRRRTFAIIS…AFIRFASRPG (270 aa). GTP contacts are provided by residues 20 to 27, 88 to 92, and 142 to 145; these read SHPDAGKT, DTPGH, and NKLD.

The protein belongs to the TRAFAC class translation factor GTPase superfamily. Classic translation factor GTPase family. PrfC subfamily.

Its subcellular location is the cytoplasm. In terms of biological role, increases the formation of ribosomal termination complexes and stimulates activities of RF-1 and RF-2. It binds guanine nucleotides and has strong preference for UGA stop codons. It may interact directly with the ribosome. The stimulation of RF-1 and RF-2 is significantly reduced by GTP and GDP, but not by GMP. This Gloeobacter violaceus (strain ATCC 29082 / PCC 7421) protein is Peptide chain release factor 3.